A 103-amino-acid polypeptide reads, in one-letter code: Growth-regulated alpha protein (103 aa).

An N-terminal signal peptide occupies residues 1–30 (MARAANPAPRLLGAAMLLLLLVAAGRRAAG). 2 cysteine pairs are disulfide-bonded: Cys-39–Cys-65 and Cys-41–Cys-81.

The protein belongs to the intercrine alpha (chemokine CxC) family.

The protein resides in the secreted. Its function is as follows. Has chemotactic activity for neutrophils. This Ovis aries (Sheep) protein is Growth-regulated alpha protein (CXCL1).